Consider the following 563-residue polypeptide: L-lactate permease (563 aa).

Transmembrane regions (helical) follow at residues 14-34, 37-57, 73-93, 131-151, 157-177, 194-214, 220-240, 249-269, 304-324, 381-401, 419-439, 448-468, 506-526, and 542-562; these read LLLS…ALAI, MKGY…AVLV, AVYG…LYKI, GAAG…GLGF, AGIC…GIPI, MVGR…IIIM, ALEI…VQYL, LPDV…LKWW, IFKA…WGIP, LGSA…ITAI, LPIL…SSGM, ALTG…GVFI, VTGK…VGLA, and FLLL…SWMI.

This sequence belongs to the lactate permease family.

It is found in the cell membrane. In terms of biological role, is the principal permease for the uptake of L-lactate in B.subtilis. This is L-lactate permease (lutP) from Bacillus subtilis (strain 168).